The chain runs to 162 residues: SsrA-binding protein (162 aa).

It belongs to the SmpB family.

Its subcellular location is the cytoplasm. Its function is as follows. Required for rescue of stalled ribosomes mediated by trans-translation. Binds to transfer-messenger RNA (tmRNA), required for stable association of tmRNA with ribosomes. tmRNA and SmpB together mimic tRNA shape, replacing the anticodon stem-loop with SmpB. tmRNA is encoded by the ssrA gene; the 2 termini fold to resemble tRNA(Ala) and it encodes a 'tag peptide', a short internal open reading frame. During trans-translation Ala-aminoacylated tmRNA acts like a tRNA, entering the A-site of stalled ribosomes, displacing the stalled mRNA. The ribosome then switches to translate the ORF on the tmRNA; the nascent peptide is terminated with the 'tag peptide' encoded by the tmRNA and targeted for degradation. The ribosome is freed to recommence translation, which seems to be the essential function of trans-translation. In Shewanella frigidimarina (strain NCIMB 400), this protein is SsrA-binding protein.